The following is a 336-amino-acid chain: Tetraacyldisaccharide 4'-kinase (336 aa).

ATP is bound at residue T60–T67.

Belongs to the LpxK family.

The catalysed reaction is a lipid A disaccharide + ATP = a lipid IVA + ADP + H(+). It participates in glycolipid biosynthesis; lipid IV(A) biosynthesis; lipid IV(A) from (3R)-3-hydroxytetradecanoyl-[acyl-carrier-protein] and UDP-N-acetyl-alpha-D-glucosamine: step 6/6. Functionally, transfers the gamma-phosphate of ATP to the 4'-position of a tetraacyldisaccharide 1-phosphate intermediate (termed DS-1-P) to form tetraacyldisaccharide 1,4'-bis-phosphate (lipid IVA). The chain is Tetraacyldisaccharide 4'-kinase from Pseudomonas entomophila (strain L48).